Reading from the N-terminus, the 199-residue chain is Small ribosomal subunit protein eS1 (199 aa).

It belongs to the eukaryotic ribosomal protein eS1 family.

This chain is Small ribosomal subunit protein eS1, found in Pyrococcus horikoshii (strain ATCC 700860 / DSM 12428 / JCM 9974 / NBRC 100139 / OT-3).